We begin with the raw amino-acid sequence, 819 residues long: Probable phosphoenolpyruvate synthase (819 aa).

The Tele-phosphohistidine intermediate role is filled by H441. Substrate is bound by residues R540, R587, E684, G706, T707, N708, and D709. E684 is a Mg(2+) binding site. Residue D709 coordinates Mg(2+). Catalysis depends on C756, which acts as the Proton donor.

Belongs to the PEP-utilizing enzyme family. Requires Mg(2+) as cofactor.

The enzyme catalyses pyruvate + ATP + H2O = phosphoenolpyruvate + AMP + phosphate + 2 H(+). It participates in carbohydrate biosynthesis; gluconeogenesis. In terms of biological role, catalyzes the phosphorylation of pyruvate to phosphoenolpyruvate. In Pyrococcus abyssi (strain GE5 / Orsay), this protein is Probable phosphoenolpyruvate synthase (ppsA).